The primary structure comprises 347 residues: METPNPLTLSELPHDLLRNIFNRLSFADFHRATWNSISKQTAPPKTKSPWLILFPDEGVHGCVLYNPDEDRIYKSVRDFSGTIFLANSGNWFLVMDSKSNLYIIDVFSENRIDLPPLESLLSDNFTFEQKGDKELKWQASNDQILVFRLPRAEELRGILWVDEKMKEFVAVWFLEDSCNFLAFYKKADDHYSHIQLEYVITDVFQSVSDIVLHGCFLYIGVGDYIQIIDLSKDQGFKDVTRNYLFNVHNGPWGFRSIFNLVVTTSGEVLMVLNNLYEKNIESEKSFRIFKKDPNPDPNKHDNLLVEVDSLGNEEVMLLDLGITMHGIEPNSIYFTRHDRVVHRLYIS.

Positions 6-52 constitute an F-box domain; the sequence is PLTLSELPHDLLRNIFNRLSFADFHRATWNSISKQTAPPKTKSPWLI.

The sequence is that of F-box protein At2g14500 from Arabidopsis thaliana (Mouse-ear cress).